The following is a 144-amino-acid chain: Transcription antitermination protein NusB (144 aa).

It belongs to the NusB family.

Functionally, involved in transcription antitermination. Required for transcription of ribosomal RNA (rRNA) genes. Binds specifically to the boxA antiterminator sequence of the ribosomal RNA (rrn) operons. This Streptococcus thermophilus (strain CNRZ 1066) protein is Transcription antitermination protein NusB.